The primary structure comprises 156 residues: rRNA methyltransferase (156 aa).

Functionally, modifies 16S rRNA so making ribosomes resistant to certain aminoglycosides. This chain is rRNA methyltransferase (kamC), found in Saccharopolyspora hirsuta.